Here is a 346-residue protein sequence, read N- to C-terminus: Putative F-box/kelch-repeat protein At1g27420 (346 aa).

Positions 9-56 constitute an F-box domain; that stretch reads PIIPGLTDDVAELCVSKIPRSSFQITSQVCRRWRSFLRSQHFAAVRKL. Kelch repeat units follow at residues 62–109, 111–167, 168–215, 217–257, and 259–300; these read EFLC…VLDG, KIVF…EVNG, LLYV…AFSS, LYAV…VRNK, and YFMD…VWNN.

The chain is Putative F-box/kelch-repeat protein At1g27420 from Arabidopsis thaliana (Mouse-ear cress).